Here is a 198-residue protein sequence, read N- to C-terminus: GTP-binding protein Di-Ras1 (198 aa).

Residues 17 to 22 (GVGKSS), 33 to 39 (RDTYIPT), 61 to 65 (DTTGS), 121 to 125 (NKCDE), Ala151, and 151 to 152 (AK) contribute to the GTP site. The Effector region motif lies at 36 to 44 (YIPTIEDTY). Cys195 carries the cysteine methyl ester modification. Cys195 carries S-geranylgeranyl cysteine lipidation. Residues 196–198 (ALM) constitute a propeptide, removed in mature form.

The protein belongs to the small GTPase superfamily. Di-Ras family.

It localises to the cell membrane. In terms of biological role, displays low GTPase activity and exists predominantly in the GTP-bound form. This chain is GTP-binding protein Di-Ras1 (Diras1), found in Mus musculus (Mouse).